Reading from the N-terminus, the 1796-residue chain is U3 small nucleolar RNA-associated protein 10 (1796 aa).

HEAT repeat units lie at residues 586-623 (LDLQAMIPYCVAALSDPAKKVRQAAADLITVLSKSNAE), 656-692 (LLQEIIVPALEESVLDEEHISNVLRSHLQSTKDSATG), 861-898 (DLTTNILNAFLESLQDIPKITTDSPATKRRRTSSSDHS), 983-1021 (DTSVGHGDVLVQCIQKSSSPAVQNSALLLVASLANTAPD), 1052-1089 (QTIKEVIPPLVETFRKSRRNLVTSAAELLSSFVIAYEH), 1161-1198 (QPKPTLAATLFNRNTDDDQDLHKTALKELTLLPKVLSS), 1258-1295 (LSIGEFIKAVENLLDRPSISLRQKVLRTLEVRVDQESN), 1302-1340 (TVLLAFLPQLTAVIRDSDDIAYKHTAVACVDKIAEKYGK), 1344-1383 (EAVAAAATTIAGDCCLGQPDKRLRVMALLCLASLVDVLQD), 1492-1529 (SAVEEYLKLLATVLDKHPSTIIAKHISTLSTIFLSALD), 1711-1748 (DHRKELNAAVLRRLRSPSASVRLAAVRCEQSLTDTLGE), and 1752-1789 (EMLSEMLPYISELQDDDDEDVEKETHRWITKIEAILGE). A disordered region spans residues 881 to 901 (TTDSPATKRRRTSSSDHSRGV).

It belongs to the HEATR1/UTP10 family. Component of the ribosomal small subunit (SSU) processome.

The protein resides in the nucleus. It localises to the nucleolus. Involved in nucleolar processing of pre-18S ribosomal RNA. Involved in ribosome biosynthesis. This chain is U3 small nucleolar RNA-associated protein 10, found in Pyricularia oryzae (strain 70-15 / ATCC MYA-4617 / FGSC 8958) (Rice blast fungus).